A 100-amino-acid polypeptide reads, in one-letter code: RxLR effector protein PITG_18683 (100 aa).

An N-terminal signal peptide occupies residues 1 to 22; that stretch reads MRSFLYGILAFAVLARSSAVAA. The short motif at 43–57 is the RxLR-dEER element; the sequence is RSLRVEAQEVIQSGR. The Calmodulin-binding motif motif lies at 78–82; the sequence is KPDIK.

This sequence belongs to the RxLR effector family. As to quaternary structure, interacts with the host calmodulin.

The protein localises to the secreted. It localises to the host cell. In terms of biological role, secreted effector that associates with calmodulin to interfere with plant defense-associated calcium signaling in hosts. In Phytophthora infestans (strain T30-4) (Potato late blight agent), this protein is RxLR effector protein PITG_18683.